We begin with the raw amino-acid sequence, 144 residues long: Large ribosomal subunit protein bL31c (144 aa).

Residues 1 to 48 (MAVSLPNSFLQISPCVPSLQLRKPVMAAVKGGKQSVRRSSNTVVQITC) constitute a chloroplast transit peptide.

This sequence belongs to the bacterial ribosomal protein bL31 family. Type A subfamily. In terms of assembly, part of the 50S ribosomal subunit.

The protein resides in the plastid. Its subcellular location is the chloroplast. In terms of biological role, binds the 23S rRNA. The polypeptide is Large ribosomal subunit protein bL31c (RPL31) (Arabidopsis thaliana (Mouse-ear cress)).